Here is a 1319-residue protein sequence, read N- to C-terminus: Uromodulin-like 1 (1319 aa).

An N-terminal signal peptide occupies residues 1-22 (MMSRTVRLVLLALACTVDLSQA). Topologically, residues 23-1273 (SGFTENGLSL…CTKPVLGTGY (1251 aa)) are extracellular. The region spanning 34–107 (SYQLCSYPVT…FEQLGLYCVL (74 aa)) is the EMI domain. 3 disulfide bridges follow: cysteine 38-cysteine 95, cysteine 62-cysteine 71, and cysteine 94-cysteine 105. Residue asparagine 90 is glycosylated (N-linked (GlcNAc...) asparagine). Asparagine 110 carries an N-linked (GlcNAc...) asparagine glycan. Residues 115–159 (FASRPGVCPTAEAEPLSPSCSLDTDCSGLQKCCSWPGGRHCVSPT) enclose the WAP domain. N-linked (GlcNAc...) asparagine glycans are attached at residues asparagine 172, asparagine 193, and asparagine 243. Residues 265–306 (DVNECLHSELQACSVREQCRNLEGSYQCVSSQRLNHTDEDCP) form the EGF-like 1; calcium-binding domain. 2 disulfide bridges follow: cysteine 269-cysteine 283 and cysteine 277-cysteine 292. Residues 307 to 391 (PIRDFVALNV…ATLVVKTDAQ (85 aa)) enclose the Fibronectin type-III 1 domain. Asparagine 315 carries N-linked (GlcNAc...) asparagine glycosylation. In terms of domain architecture, SEA 1 spans 389–503 (DAQVFQVTIR…QRTFVQDWDE (115 aa)). The EGF-like 2; calcium-binding domain occupies 500–545 (DWDECAHSSEHDCHPSARCINLEGSYTCQCLTARDASPSRAGRVCE). 3 cysteine pairs are disulfide-bonded: cysteine 504–cysteine 518, cysteine 512–cysteine 527, and cysteine 529–cysteine 544. 2 disordered regions span residues 569-649 (TGIT…ITKD) and 664-703 (HSSP…PESP). Over residues 619–632 (TGQGQTHGTHQGTT) the composition is skewed to low complexity. The segment covering 638-647 (TTRESQELIT) has biased composition (basic and acidic residues). Residues 664–678 (HSSPTWKTPPNSTRL) show a composition bias toward polar residues. The region spanning 709 to 795 (PIGKVTVSNV…QLKVRTVAQK (87 aa)) is the Fibronectin type-III 2 domain. N-linked (GlcNAc...) asparagine glycosylation is found at asparagine 717 and asparagine 757. Residues 792-904 (VAQKLAGNVR…GKTFMQDYNE (113 aa)) enclose the SEA 2 domain. One can recognise an EGF-like 3; calcium-binding domain in the interval 901 to 945 (DYNECDMKEDDCAPGTCRNTFGSFTCSCDEGGPDSQVEYSGRSCD). Cystine bridges form between cysteine 905/cysteine 917, cysteine 912/cysteine 926, and cysteine 928/cysteine 944. Residues 939-966 (YSGRSCDGDPSGNMTQTPGSEWSPTPAG) are disordered. The segment covering 950–961 (GNMTQTPGSEWS) has biased composition (polar residues). Asparagine 951 carries N-linked (GlcNAc...) asparagine glycosylation. The ZP domain maps to 995 to 1238 (SCEIETVIIT…NSCRISCNDF (244 aa)). Cysteine 1160 and cysteine 1218 are disulfide-bonded. A helical transmembrane segment spans residues 1274 to 1294 (IILLAAAALLVVAGATTLLIL). At 1295–1319 (RYQRVRQKYNLRIQTDDFSYQVFSQ) the chain is on the cytoplasmic side.

It is found in the cell membrane. The sequence is that of Uromodulin-like 1 (Umodl1) from Mus musculus (Mouse).